A 670-amino-acid polypeptide reads, in one-letter code: DNA ligase (670 aa).

NAD(+)-binding positions include 33–37, 82–83, and E114; these read DAEYD and SL. K116 serves as the catalytic N6-AMP-lysine intermediate. The NAD(+) site is built by R137, E174, K291, and K315. Residues C409, C412, C427, and C433 each coordinate Zn(2+). Residues 593–670 enclose the BRCT domain; sequence GAELPLEGKT…TEQDLLELIN (78 aa).

Belongs to the NAD-dependent DNA ligase family. LigA subfamily. The cofactor is Mg(2+). Mn(2+) serves as cofactor.

The enzyme catalyses NAD(+) + (deoxyribonucleotide)n-3'-hydroxyl + 5'-phospho-(deoxyribonucleotide)m = (deoxyribonucleotide)n+m + AMP + beta-nicotinamide D-nucleotide.. DNA ligase that catalyzes the formation of phosphodiester linkages between 5'-phosphoryl and 3'-hydroxyl groups in double-stranded DNA using NAD as a coenzyme and as the energy source for the reaction. It is essential for DNA replication and repair of damaged DNA. This Vibrio parahaemolyticus serotype O3:K6 (strain RIMD 2210633) protein is DNA ligase.